The following is a 1363-amino-acid chain: MFLILLISLPMALAVIGDLKCTTVSINDVDTGVPSVSTDTVDVTNGLGTYYVLDRVYLNTTLLLNGYYPTSGSTYRNMALKGTLLLSTLWFKPPFLSDFINGIFAKVKNTKVIKNGVMYSEFPAITIGSTFVNTSYSVVVQPHTTNLDNKLQGLLEISVCQYTMCEYPHTICHPNLGNRRIELWHWDTGVVSCLYKRNFTYDVNADYLYFHFYQEGGTFYAYFTDTGVVTKFLFNVYLGTVLSHYYVMPLTCNSAMTLEYWVTPLTSKQYLLAFNQDGVIFNAVDCKSDFMSEIKCKTLSIAPSTGVYELNGYTVQPIADVYRRIPNLPDCNIEAWLNDKSVPSPLNWERKTFSNCNFNMSSLMSFIQADSFTCNNIDAAKIYGMCFSSITIDKFAIPNGRKVDLQLGNLGYLQSFNYRIDTTATSCQLYYNLPAANVSVSRFNPSTWNRRFGFTEQSVFKPQPVGVFTDHDVVYAQHCFKAPTNFCPCKLDGSLCVGSGSGIDAGYKNSGIGTCPAGTNYLTCHNAAQCDCLCTPDPITSKSTGPYKCPQTKYLVGIGEHCSGLAIKSDYCGGNPCTCQPQAFLGWSVDSCLQGDRCNIFANFILHDVNSGTTCSTDLQKSNTDIILGVCVNYDLYGITGQGIFVEVNATYYNSWQNLLYDSNGNLYGFRDYLTNRTFMIRSCYSGRVSAAFHANSSEPALLFRNIKCNYVFNNTLSRQLQPINYFDSYLGCVVNADNSTSSAVQTCDLTVGSGYCVDYSTKRRSRRAITTGYRFTNFEPFTVNSVNDSLEPVGGLYEIQIPSEFTIGNMEEFIQISSPKVTIDCSAFVCGDYAACKSQLVEYGSFCDNINAILTEVNELLDTTQLQVANSLMNGVTLSTKLKDGVNFNVDDINFSPVLGCLGSDCNKVSSRSAIEDLLFSKVKLSDVGFVEAYNNCTGGAEIRDLICVQSYNGIKVLPPLLSENQISGYTLAATSASLFPPWSAAAGVPFYLNVQYRINGIGVTMDVLSQNQKLIANAFNNALDAIQEGFDATNSALVKIQAVVNANAEALNNLLQQLSNRFGAISSSLQEILSRLDALEAQAQIDRLINGRLTALNAYVSQQLSDSTLVKFSAAQAMEKVNECVKSQSSRINFCGNGNHIISLVQNAPYGLYFIHFSYVPTKYVTAKVSPGLCIAGDRGIAPKSGYFVNVNNTWMFTGSGYYYPEPITGNNVVVMSTCAVNYTKAPDVMLNISTPNLPDFKEELDQWFKNQTSVAPDLSLDYINVTFLDLQDEMNRLQEAIKVLNQSYINLKDIGTYEYYVKWPWYVWLLIGLAGVAMLVLLFFICCCTGCGTSCFKKCGGCCDDYTGHQELVIKTSHDD.

The N-terminal stretch at 1 to 13 (MFLILLISLPMAL) is a signal peptide. Over 14–1307 (AVIGDLKCTT…GTYEYYVKWP (1294 aa)) the chain is Extracellular. One can recognise a BetaCoV S1-NTD domain in the interval 15 to 298 (VIGDLKCTTV…DFMSEIKCKT (284 aa)). 5 disulfide bridges follow: Cys-21-Cys-165, Cys-160-Cys-193, Cys-172-Cys-252, Cys-286-Cys-296, and Cys-331-Cys-356. N-linked (GlcNAc...) asparagine; by host glycans are attached at residues Asn-59 and Asn-133. Asn-198 carries N-linked (GlcNAc...) asparagine; by host glycosylation. The 289-residue stretch at 329–617 (PDCNIEAWLN…DVNSGTTCST (289 aa)) folds into the BetaCoV S1-CTD domain. An N-linked (GlcNAc...) asparagine; by host glycan is attached at Asn-359. 2 disulfides stabilise this stretch: Cys-374–Cys-427 and Cys-386–Cys-615. N-linked (GlcNAc...) asparagine; by host glycans are attached at residues Asn-437, Asn-649, Asn-676, Asn-696, Asn-714, Asn-739, and Asn-788. 2 fusion peptide regions span residues 914-935 (SAIEDLLFSKVKLSDVGFVEAY) and 933-953 (EAYNNCTGGAEIRDLICVQSY). N-linked (GlcNAc...) asparagine; by host glycosylation is present at Asn-937. Cysteines 938 and 949 form a disulfide. Residues 1014-1064 (QKLIANAFNNALDAIQEGFDATNSALVKIQAVVNANAEALNNLLQQLSNRF) are heptad repeat 1. Residues 1043-1087 (QAVVNANAEALNNLLQQLSNRFGAISSSLQEILSRLDALEAQAQI) are a coiled coil. N-linked (GlcNAc...) asparagine; by host glycans are attached at residues Asn-1194, Asn-1224, Asn-1234, Asn-1253, Asn-1267, and Asn-1288. The tract at residues 1258–1296 (APDLSLDYINVTFLDLQDEMNRLQEAIKVLNQSYINLKD) is heptad repeat 2. Residues 1269–1297 (TFLDLQDEMNRLQEAIKVLNQSYINLKDI) are a coiled coil. The chain crosses the membrane as a helical span at residues 1308–1328 (WYVWLLIGLAGVAMLVLLFFI). Residues 1329–1363 (CCCTGCGTSCFKKCGGCCDDYTGHQELVIKTSHDD) are Cytoplasmic-facing. Residues 1359 to 1363 (TSHDD) carry the KxHxx motif.

It belongs to the betacoronaviruses spike protein family. Homotrimer; each monomer consists of a S1 and a S2 subunit. The resulting peplomers protrude from the virus surface as spikes. Specific enzymatic cleavages in vivo yield mature proteins. The precursor is processed into S1 and S2 by host cell furin or another cellular protease to yield the mature S1 and S2 proteins. Additionally, a second cleavage leads to the release of a fusion peptide after viral attachment to host cell receptor. Post-translationally, the cytoplasmic Cys-rich domain is palmitoylated. Spike glycoprotein is digested within host endosomes.

The protein resides in the virion membrane. It localises to the host endoplasmic reticulum-Golgi intermediate compartment membrane. Its subcellular location is the host cell membrane. In terms of biological role, attaches the virion to the cell membrane by interacting with host receptor, initiating the infection. Mediates fusion of the virion and cellular membranes by acting as a class I viral fusion protein. Under the current model, the protein has at least three conformational states: pre-fusion native state, pre-hairpin intermediate state, and post-fusion hairpin state. During viral and target cell membrane fusion, the coiled coil regions (heptad repeats) assume a trimer-of-hairpins structure, positioning the fusion peptide in close proximity to the C-terminal region of the ectodomain. The formation of this structure appears to drive apposition and subsequent fusion of viral and target cell membranes. Its function is as follows. Acts as a viral fusion peptide which is unmasked following S2 cleavage occurring upon virus endocytosis. The sequence is that of Spike glycoprotein from Bos taurus (Bovine).